We begin with the raw amino-acid sequence, 441 residues long: Glutamate--tRNA ligase 1 (441 aa).

The 'HIGH' region signature appears at Pro-9–Asn-19. Positions Ala-239 to Arg-243 match the 'KMSKS' region motif. Lys-242 serves as a coordination point for ATP.

This sequence belongs to the class-I aminoacyl-tRNA synthetase family. Glutamate--tRNA ligase type 1 subfamily. As to quaternary structure, monomer.

It localises to the cytoplasm. The catalysed reaction is tRNA(Glu) + L-glutamate + ATP = L-glutamyl-tRNA(Glu) + AMP + diphosphate. In terms of biological role, catalyzes the attachment of glutamate to tRNA(Glu) in a two-step reaction: glutamate is first activated by ATP to form Glu-AMP and then transferred to the acceptor end of tRNA(Glu). The protein is Glutamate--tRNA ligase 1 of Cereibacter sphaeroides (strain ATCC 17025 / ATH 2.4.3) (Rhodobacter sphaeroides).